A 393-amino-acid polypeptide reads, in one-letter code: Na(+)/H(+) antiporter NhaA (393 aa).

12 consecutive transmembrane segments (helical) span residues 23–43 (AGGI…NSPF), 58–78 (LSLA…LVGL), 96–116 (MLPG…FAVL), 126–146 (GWAV…SLLG), 155–175 (VFLA…IAIF), 178–198 (AEIS…LFVM), 201–221 (MGVV…FFVF), 224–244 (GVHA…KPAP), 265–285 (VAFI…FKGL), 298–318 (ILLG…WLAI), 334–354 (LYGV…IGLL), and 367–387 (IGVL…LRAA).

This sequence belongs to the NhaA Na(+)/H(+) (TC 2.A.33) antiporter family.

It is found in the cell inner membrane. The catalysed reaction is Na(+)(in) + 2 H(+)(out) = Na(+)(out) + 2 H(+)(in). Na(+)/H(+) antiporter that extrudes sodium in exchange for external protons. The protein is Na(+)/H(+) antiporter NhaA of Brucella canis (strain ATCC 23365 / NCTC 10854 / RM-666).